A 171-amino-acid polypeptide reads, in one-letter code: Probable DNA-directed RNA polymerase subunit delta (171 aa).

In terms of domain architecture, HTH HARE-type spans Met-14–Trp-81. The disordered stretch occupies residues Glu-138–Glu-171.

It belongs to the RpoE family. As to quaternary structure, RNAP is composed of a core of 2 alpha, a beta and a beta' subunits. The core is associated with a delta subunit and one of several sigma factors.

Participates in both the initiation and recycling phases of transcription. In the presence of the delta subunit, RNAP displays an increased specificity of transcription, a decreased affinity for nucleic acids, and an increased efficiency of RNA synthesis because of enhanced recycling. The sequence is that of Probable DNA-directed RNA polymerase subunit delta from Bacillus licheniformis (strain ATCC 14580 / DSM 13 / JCM 2505 / CCUG 7422 / NBRC 12200 / NCIMB 9375 / NCTC 10341 / NRRL NRS-1264 / Gibson 46).